The following is a 263-amino-acid chain: Small ribosomal subunit protein eS1 (263 aa).

Positions 235–263 are disordered; the sequence is HGEGGGGKGEAGDKSERPEGYEPPVQESV. Over residues 244 to 254 the composition is skewed to basic and acidic residues; the sequence is EAGDKSERPEG.

This sequence belongs to the eukaryotic ribosomal protein eS1 family. Component of the small ribosomal subunit. Mature ribosomes consist of a small (40S) and a large (60S) subunit. The 40S subunit contains about 33 different proteins and 1 molecule of RNA (18S). The 60S subunit contains about 49 different proteins and 3 molecules of RNA (28S, 5.8S and 5S).

It localises to the cytoplasm. This Bombyx mori (Silk moth) protein is Small ribosomal subunit protein eS1.